A 720-amino-acid polypeptide reads, in one-letter code: MFNKHSVEIDWGGRPLKLETGKIARQADGAVVATYGETVVLATVVAAKAPREGVDFLPLTVDYQEKTYAAGRIPGGYFKREGRPTEKETLVSRLIDRPIRPLFVDGWRNETQVIATVLSHDMENDPDIVALVASSAALTLSGAPFKGPIGAARVGFVNDEYVLNPTLDEMVDTQLDLVVAGTADAVLMVESEAKELNEDIMLGAVMFGHRHFQPVINAIIELAEKAAKEPREVTVIDNAALEKEMLGLVEQELRAAYAIPVKQDRYAAVGKVKEKVIAHYFPEGQEPKYDKLRIAGVFKELEAKIVRWNILDTGKRIDGRDSKTVRNIIAEVGVLPRAHGSALFTRGETQAMVVTTLGTGEDEQYIDALSGTYKETFLLHYNFPPYSVGETGRLGGTKRREIGHGKLAWRAIHPVLPPHHEFPYTIRVVSEITESNGSSSMASVCGASLALMDAGVPLKRPTAGIAMGLILEDKRFAVLSDILGDEDHLGDMDFKVAGTESGITSLQMDIKIEGITEEIMKVALGQAKDGRIHILGEMAKALTNARAELGEYAPRIETFKIPTDKIREVIGTGGKVIREIVEKTGAKVNIEDDGTVKVASSDGEAMKAAIKWIKSIASEPEVGQIYDGTVVKVMEFGAFVNFFGSKDGLVHISQLASARVQKTSDVVKEGDKVKVKLLGFDDRGKTRLSMKVVDQTTGEDLEAKDKVAEGEKAPREAAGE.

Mg(2+) contacts are provided by D487 and D493. The 60-residue stretch at 554-613 (PRIETFKIPTDKIREVIGTGGKVIREIVEKTGAKVNIEDDGTVKVASSDGEAMKAAIKWI) folds into the KH domain. In terms of domain architecture, S1 motif spans 623-691 (GQIYDGTVVK…DRGKTRLSMK (69 aa)). Positions 699-720 (EDLEAKDKVAEGEKAPREAAGE) are disordered. Basic and acidic residues predominate over residues 701–720 (LEAKDKVAEGEKAPREAAGE).

This sequence belongs to the polyribonucleotide nucleotidyltransferase family. It depends on Mg(2+) as a cofactor.

The protein localises to the cytoplasm. It catalyses the reaction RNA(n+1) + phosphate = RNA(n) + a ribonucleoside 5'-diphosphate. Its function is as follows. Involved in mRNA degradation. Catalyzes the phosphorolysis of single-stranded polyribonucleotides processively in the 3'- to 5'-direction. The protein is Polyribonucleotide nucleotidyltransferase of Bradyrhizobium diazoefficiens (strain JCM 10833 / BCRC 13528 / IAM 13628 / NBRC 14792 / USDA 110).